A 266-amino-acid polypeptide reads, in one-letter code: Hydroxyethylthiazole kinase (266 aa).

Met43 is a binding site for substrate. Positions 119 and 166 each coordinate ATP. Residue Gly193 participates in substrate binding.

This sequence belongs to the Thz kinase family. Mg(2+) is required as a cofactor.

It carries out the reaction 5-(2-hydroxyethyl)-4-methylthiazole + ATP = 4-methyl-5-(2-phosphooxyethyl)-thiazole + ADP + H(+). Its pathway is cofactor biosynthesis; thiamine diphosphate biosynthesis; 4-methyl-5-(2-phosphoethyl)-thiazole from 5-(2-hydroxyethyl)-4-methylthiazole: step 1/1. Functionally, catalyzes the phosphorylation of the hydroxyl group of 4-methyl-5-beta-hydroxyethylthiazole (THZ). The chain is Hydroxyethylthiazole kinase from Methanococcus maripaludis (strain C6 / ATCC BAA-1332).